A 746-amino-acid chain; its full sequence is Polyribonucleotide nucleotidyltransferase (746 aa).

Mg(2+) contacts are provided by D520 and D526. The region spanning 586–648 (PRIITVKVPV…EAARAAVNAI (63 aa)) is the KH domain. Residues 657 to 729 (GERYLGTVVK…PRGKLSLVPV (73 aa)) enclose the S1 motif domain.

The protein belongs to the polyribonucleotide nucleotidyltransferase family. Requires Mg(2+) as cofactor.

The protein localises to the cytoplasm. The enzyme catalyses RNA(n+1) + phosphate = RNA(n) + a ribonucleoside 5'-diphosphate. Functionally, involved in mRNA degradation. Catalyzes the phosphorolysis of single-stranded polyribonucleotides processively in the 3'- to 5'-direction. The sequence is that of Polyribonucleotide nucleotidyltransferase from Kineococcus radiotolerans (strain ATCC BAA-149 / DSM 14245 / SRS30216).